The sequence spans 63 residues: Large ribosomal subunit protein bL28 (63 aa).

This sequence belongs to the bacterial ribosomal protein bL28 family.

In Coprothermobacter proteolyticus (strain ATCC 35245 / DSM 5265 / OCM 4 / BT), this protein is Large ribosomal subunit protein bL28.